The following is a 430-amino-acid chain: Formate-dependent phosphoribosylglycinamide formyltransferase (430 aa).

N(1)-(5-phospho-beta-D-ribosyl)glycinamide is bound by residues 26–27 (EL) and Glu86. ATP contacts are provided by residues Arg118, Lys159, 199–202 (EEHI), and Glu207. One can recognise an ATP-grasp domain in the interval 123-319 (ETLVKEAKVP…EFALHLRAVL (197 aa)). Positions 276 and 288 each coordinate Mg(2+). Residues Asp295, Lys375, and 382–383 (RR) contribute to the N(1)-(5-phospho-beta-D-ribosyl)glycinamide site.

It belongs to the PurK/PurT family. Homodimer.

It catalyses the reaction N(1)-(5-phospho-beta-D-ribosyl)glycinamide + formate + ATP = N(2)-formyl-N(1)-(5-phospho-beta-D-ribosyl)glycinamide + ADP + phosphate + H(+). It participates in purine metabolism; IMP biosynthesis via de novo pathway; N(2)-formyl-N(1)-(5-phospho-D-ribosyl)glycinamide from N(1)-(5-phospho-D-ribosyl)glycinamide (formate route): step 1/1. Its function is as follows. Involved in the de novo purine biosynthesis. Catalyzes the transfer of formate to 5-phospho-ribosyl-glycinamide (GAR), producing 5-phospho-ribosyl-N-formylglycinamide (FGAR). Formate is provided by PurU via hydrolysis of 10-formyl-tetrahydrofolate. The sequence is that of Formate-dependent phosphoribosylglycinamide formyltransferase from Pyrococcus horikoshii (strain ATCC 700860 / DSM 12428 / JCM 9974 / NBRC 100139 / OT-3).